A 211-amino-acid polypeptide reads, in one-letter code: Thymidylate kinase (211 aa).

11–18 (GPDGAGKT) contacts ATP.

This sequence belongs to the thymidylate kinase family.

The enzyme catalyses dTMP + ATP = dTDP + ADP. In terms of biological role, phosphorylation of dTMP to form dTDP in both de novo and salvage pathways of dTTP synthesis. In Streptococcus agalactiae serotype Ia (strain ATCC 27591 / A909 / CDC SS700), this protein is Thymidylate kinase.